The primary structure comprises 475 residues: Glycogen synthase (475 aa).

An ADP-alpha-D-glucose-binding site is contributed by lysine 15.

The protein belongs to the glycosyltransferase 1 family. Bacterial/plant glycogen synthase subfamily.

The catalysed reaction is [(1-&gt;4)-alpha-D-glucosyl](n) + ADP-alpha-D-glucose = [(1-&gt;4)-alpha-D-glucosyl](n+1) + ADP + H(+). The protein operates within glycan biosynthesis; glycogen biosynthesis. Its function is as follows. Synthesizes alpha-1,4-glucan chains using ADP-glucose. The polypeptide is Glycogen synthase (Anaeromyxobacter sp. (strain K)).